The primary structure comprises 165 residues: Chorismate pyruvate-lyase (165 aa).

Substrate is bound by residues M35, R77, L115, and E156.

The protein belongs to the UbiC family. Monomer.

Its subcellular location is the cytoplasm. It catalyses the reaction chorismate = 4-hydroxybenzoate + pyruvate. It functions in the pathway cofactor biosynthesis; ubiquinone biosynthesis. Its function is as follows. Removes the pyruvyl group from chorismate, with concomitant aromatization of the ring, to provide 4-hydroxybenzoate (4HB) for the ubiquinone pathway. The protein is Chorismate pyruvate-lyase of Salmonella gallinarum (strain 287/91 / NCTC 13346).